The sequence spans 514 residues: Zinc finger and BTB domain-containing protein 2 (514 aa).

The BTB domain occupies 24-89 (CDCTVAIGDV…MYTGKMAPQL (66 aa)). Glycyl lysine isopeptide (Lys-Gly) (interchain with G-Cter in SUMO2) cross-links involve residues Lys147 and Lys154. The tract at residues 149–231 (ASAPEKLGRD…LEASSSDEQP (83 aa)) is disordered. Polar residues-rich tracts occupy residues 161–200 (PQTSRISQEQVPEASQLSQLTSNLAQVNRTNMTPSDPLQT) and 222–231 (LEASSSDEQP). The C2H2-type 1 zinc-finger motif lies at 254 to 276 (YACHLCGRRFTLRSSLREHLQIH). Ser341 bears the Phosphoserine mark. Lys362 participates in a covalent cross-link: Glycyl lysine isopeptide (Lys-Gly) (interchain with G-Cter in SUMO2). The segment at 363 to 385 (YECTICGRKFIQKSHWREHMYIH) adopts a C2H2-type 2 zinc-finger fold. The segment at 390 to 410 (FKCSTCDKSFCRANQAARHVC) adopts a C2H2-type 3; atypical zinc-finger fold. The segment at 448 to 468 (YKCNLCDKTFSTPNEVVKHSC) adopts a C2H2-type 4; atypical zinc-finger fold. Residues Lys465, Lys505, and Lys506 each participate in a glycyl lysine isopeptide (Lys-Gly) (interchain with G-Cter in SUMO2) cross-link.

The protein resides in the nucleus. Its function is as follows. May be involved in transcriptional regulation. This is Zinc finger and BTB domain-containing protein 2 (ZBTB2) from Homo sapiens (Human).